The primary structure comprises 231 residues: Biosynthetic peptidoglycan transglycosylase (231 aa).

A helical membrane pass occupies residues Leu-7–Phe-27.

This sequence belongs to the glycosyltransferase 51 family.

It localises to the cell inner membrane. It carries out the reaction [GlcNAc-(1-&gt;4)-Mur2Ac(oyl-L-Ala-gamma-D-Glu-L-Lys-D-Ala-D-Ala)](n)-di-trans,octa-cis-undecaprenyl diphosphate + beta-D-GlcNAc-(1-&gt;4)-Mur2Ac(oyl-L-Ala-gamma-D-Glu-L-Lys-D-Ala-D-Ala)-di-trans,octa-cis-undecaprenyl diphosphate = [GlcNAc-(1-&gt;4)-Mur2Ac(oyl-L-Ala-gamma-D-Glu-L-Lys-D-Ala-D-Ala)](n+1)-di-trans,octa-cis-undecaprenyl diphosphate + di-trans,octa-cis-undecaprenyl diphosphate + H(+). The protein operates within cell wall biogenesis; peptidoglycan biosynthesis. Peptidoglycan polymerase that catalyzes glycan chain elongation from lipid-linked precursors. The sequence is that of Biosynthetic peptidoglycan transglycosylase from Herminiimonas arsenicoxydans.